A 277-amino-acid chain; its full sequence is Small ribosomal subunit protein mS23 (277 aa).

Disordered regions lie at residues 48 to 85 (APSH…KKPS) and 232 to 277 (LAAF…GPPI). The segment covering 244–269 (ESGESEDEIPLIEEEDAIGASEESET) has biased composition (acidic residues).

The protein belongs to the mitochondrion-specific ribosomal protein mS23 family. Component of the mitochondrial small ribosomal subunit.

The protein localises to the mitochondrion. The protein is Small ribosomal subunit protein mS23 (RSM25) of Ajellomyces capsulatus (strain NAm1 / WU24) (Darling's disease fungus).